The primary structure comprises 245 residues: Thiopurine S-methyltransferase (245 aa).

29–40 is a binding site for S-adenosyl-L-methionine; the sequence is WREKWVDGKIGF. Phe-40 is a binding site for substrate. An N6-acetyllysine modification is found at Lys-58. Residues Leu-69, Glu-90, and Arg-152 each contribute to the S-adenosyl-L-methionine site.

This sequence belongs to the class I-like SAM-binding methyltransferase superfamily. TPMT family. Monomer.

The protein localises to the cytoplasm. The catalysed reaction is S-adenosyl-L-methionine + a thiopurine = S-adenosyl-L-homocysteine + a thiopurine S-methylether.. The polypeptide is Thiopurine S-methyltransferase (TPMT) (Panthera leo (Lion)).